A 438-amino-acid chain; its full sequence is Nucleolar protein 12 (438 aa).

Disordered stretches follow at residues 1–28 and 60–94; these read MGET…VDPT and ANGV…LNDS. Residues 60-71 show a composition bias toward acidic residues; the sequence is ANGVEEAAETIE. Ser94 and Ser95 each carry phosphoserine. Residues 108-146 form a disordered region; that stretch reads AEEDEEKDKDSAGLINDEEDKSPAKQSVLEERTSQEDVK. Residues 135–146 show a composition bias toward basic and acidic residues; that stretch reads VLEERTSQEDVK. RRM domains lie at 164 to 262 and 270 to 348; these read KTVF…SVSH and RCVF…RAKS. 2 stretches are compositionally biased toward basic residues: residues 346–357 and 402–412; these read AKSTKPKSITRS and AKKKVNKKRKE. Disordered stretches follow at residues 346–366 and 390–438; these read AKST…KTRT and EGHR…KKDK.

This sequence belongs to the RRM RBM34 family.

The protein resides in the nucleus. It is found in the nucleolus. Its function is as follows. Involved in pre-25S rRNA processing. The polypeptide is Nucleolar protein 12 (nop12) (Schizosaccharomyces pombe (strain 972 / ATCC 24843) (Fission yeast)).